Consider the following 323-residue polypeptide: uncharacterized protein (323 aa).

Tyr-59 functions as the Proton donor in the catalytic mechanism. Residue 198 to 208 (SPLAQGLLGGK) participates in NADP(+) binding.

It belongs to the aldo/keto reductase family. Aldo/keto reductase 2 subfamily.

This is an uncharacterized protein from Mycobacterium tuberculosis (strain CDC 1551 / Oshkosh).